The sequence spans 333 residues: Transaldolase (333 aa).

The Schiff-base intermediate with substrate role is filled by Lys-135.

This sequence belongs to the transaldolase family. Type 1 subfamily. Homodimer.

The protein localises to the cytoplasm. It carries out the reaction D-sedoheptulose 7-phosphate + D-glyceraldehyde 3-phosphate = D-erythrose 4-phosphate + beta-D-fructose 6-phosphate. Its pathway is carbohydrate degradation; pentose phosphate pathway; D-glyceraldehyde 3-phosphate and beta-D-fructose 6-phosphate from D-ribose 5-phosphate and D-xylulose 5-phosphate (non-oxidative stage): step 2/3. Functionally, transaldolase is important for the balance of metabolites in the pentose-phosphate pathway. This chain is Transaldolase, found in Prochlorococcus marinus (strain MIT 9312).